The sequence spans 315 residues: Ribosomal protein L11 methyltransferase (315 aa).

S-adenosyl-L-methionine contacts are provided by Thr164, Gly185, Asp207, and Asn250.

Belongs to the methyltransferase superfamily. PrmA family.

The protein resides in the cytoplasm. It catalyses the reaction L-lysyl-[protein] + 3 S-adenosyl-L-methionine = N(6),N(6),N(6)-trimethyl-L-lysyl-[protein] + 3 S-adenosyl-L-homocysteine + 3 H(+). Methylates ribosomal protein L11. The polypeptide is Ribosomal protein L11 methyltransferase (Exiguobacterium sibiricum (strain DSM 17290 / CCUG 55495 / CIP 109462 / JCM 13490 / 255-15)).